A 163-amino-acid polypeptide reads, in one-letter code: Epithelial membrane protein 3 (163 aa).

Residues 4 to 24 (LLLVVSALHILILILLFVATL) form a helical membrane-spanning segment. N-linked (GlcNAc...) asparagine glycans are attached at residues N49 and N56. 3 consecutive transmembrane segments (helical) span residues 66 to 86 (VQVLMVLSLILCCLSFILFMF), 100 to 120 (TGFCQLCTSVAVFTGALIYAI), and 139 to 159 (FALAWVAFPLALASGIIYIHL).

This sequence belongs to the PMP-22/EMP/MP20 family.

The protein localises to the membrane. Its function is as follows. Probably involved in cell proliferation and cell-cell interactions. This Bos taurus (Bovine) protein is Epithelial membrane protein 3 (EMP3).